We begin with the raw amino-acid sequence, 405 residues long: Imidazolonepropionase (405 aa).

Positions 73 and 75 each coordinate Fe(3+). Residues histidine 73 and histidine 75 each coordinate Zn(2+). 4-imidazolone-5-propanoate contacts are provided by arginine 82, tyrosine 145, and histidine 178. N-formimidoyl-L-glutamate is bound at residue tyrosine 145. Position 243 (histidine 243) interacts with Fe(3+). Zn(2+) is bound at residue histidine 243. Glutamine 246 serves as a coordination point for 4-imidazolone-5-propanoate. Fe(3+) is bound at residue aspartate 318. Aspartate 318 serves as a coordination point for Zn(2+). The N-formimidoyl-L-glutamate site is built by asparagine 320 and glycine 322. 4-imidazolone-5-propanoate is bound at residue threonine 323.

The protein belongs to the metallo-dependent hydrolases superfamily. HutI family. Requires Zn(2+) as cofactor. Fe(3+) is required as a cofactor.

The protein resides in the cytoplasm. The catalysed reaction is 4-imidazolone-5-propanoate + H2O = N-formimidoyl-L-glutamate. The protein operates within amino-acid degradation; L-histidine degradation into L-glutamate; N-formimidoyl-L-glutamate from L-histidine: step 3/3. Functionally, catalyzes the hydrolytic cleavage of the carbon-nitrogen bond in imidazolone-5-propanoate to yield N-formimidoyl-L-glutamate. It is the third step in the universal histidine degradation pathway. The chain is Imidazolonepropionase from Brucella abortus (strain S19).